A 333-amino-acid polypeptide reads, in one-letter code: Thiamine-monophosphate kinase (333 aa).

Mg(2+)-binding residues include Asp35, Thr50, and Asp51. A substrate-binding site is contributed by His58. Asp80 provides a ligand contact to Mg(2+). ATP contacts are provided by residues Tyr111, 128-129 (GD), and Arg153. Asp129 is a Mg(2+) binding site. Residue Asp230 participates in Mg(2+) binding. An ATP-binding site is contributed by Ser232. Asp233 contacts Mg(2+). 2 residues coordinate substrate: Glu278 and Phe330.

It belongs to the thiamine-monophosphate kinase family.

The catalysed reaction is thiamine phosphate + ATP = thiamine diphosphate + ADP. The protein operates within cofactor biosynthesis; thiamine diphosphate biosynthesis; thiamine diphosphate from thiamine phosphate: step 1/1. Catalyzes the ATP-dependent phosphorylation of thiamine-monophosphate (TMP) to form thiamine-pyrophosphate (TPP), the active form of vitamin B1. This is Thiamine-monophosphate kinase from Prochlorococcus marinus (strain SARG / CCMP1375 / SS120).